Reading from the N-terminus, the 137-residue chain is Methylglyoxal synthase (137 aa).

The MGS-like domain occupies 1–137 (MNIALVAHDQ…EVRKSKSQRI (137 aa)). Residues His8, Lys12, 34–37 (TGTT), and 54–55 (SG) each bind substrate. Asp60 functions as the Proton donor/acceptor in the catalytic mechanism. His87 serves as a coordination point for substrate.

Belongs to the methylglyoxal synthase family.

The enzyme catalyses dihydroxyacetone phosphate = methylglyoxal + phosphate. Functionally, catalyzes the formation of methylglyoxal from dihydroxyacetone phosphate. This is Methylglyoxal synthase from Clostridioides difficile (strain 630) (Peptoclostridium difficile).